A 448-amino-acid polypeptide reads, in one-letter code: Tubulin beta chain (448 aa).

Q11, E69, S138, G142, T143, G144, N204, and N226 together coordinate GTP. Mg(2+) is bound at residue E69. The segment at 425–448 (YQDASISEGEEEYLEEEEPLEHEE) is disordered. The span at 432–448 (EGEEEYLEEEEPLEHEE) shows a compositional bias: acidic residues.

The protein belongs to the tubulin family. Dimer of alpha and beta chains. A typical microtubule is a hollow water-filled tube with an outer diameter of 25 nm and an inner diameter of 15 nM. Alpha-beta heterodimers associate head-to-tail to form protofilaments running lengthwise along the microtubule wall with the beta-tubulin subunit facing the microtubule plus end conferring a structural polarity. Microtubules usually have 13 protofilaments but different protofilament numbers can be found in some organisms and specialized cells. Mg(2+) is required as a cofactor.

The protein resides in the cytoplasm. It is found in the cytoskeleton. Functionally, tubulin is the major constituent of microtubules, a cylinder consisting of laterally associated linear protofilaments composed of alpha- and beta-tubulin heterodimers. Microtubules grow by the addition of GTP-tubulin dimers to the microtubule end, where a stabilizing cap forms. Below the cap, tubulin dimers are in GDP-bound state, owing to GTPase activity of alpha-tubulin. The sequence is that of Tubulin beta chain (benR) from Aspergillus parasiticus.